A 33-amino-acid chain; its full sequence is Photosystem II reaction center protein Psb30 (33 aa).

The helical transmembrane segment at 5–25 (VIAQLTVLSLIVLSGPLVIIL) threads the bilayer.

It belongs to the Psb30/Ycf12 family. As to quaternary structure, PSII is composed of 1 copy each of membrane proteins PsbA, PsbB, PsbC, PsbD, PsbE, PsbF, PsbH, PsbI, PsbJ, PsbK, PsbL, PsbM, PsbT, PsbX, PsbY, PsbZ, Psb30/Ycf12, peripheral proteins of the oxygen-evolving complex and a large number of cofactors. It forms dimeric complexes.

The protein resides in the plastid. Its subcellular location is the chloroplast thylakoid membrane. A core subunit of photosystem II (PSII), probably helps stabilize the reaction center. The chain is Photosystem II reaction center protein Psb30 from Chlorokybus atmophyticus (Soil alga).